The primary structure comprises 263 residues: 3-oxo-5-alpha-steroid 4-dehydrogenase 1 (263 aa).

A run of 5 helical transmembrane segments spans residues 16–33 (MLAA…AVLA), 90–110 (ILLA…PFLM), 115–135 (PMPL…GYLQ), 155–175 (FLIG…SDHI), and 213–233 (YALA…FCFL).

Belongs to the steroid 5-alpha reductase family.

Its subcellular location is the microsome membrane. It is found in the endoplasmic reticulum membrane. The enzyme catalyses a 3-oxo-5alpha-steroid + NADP(+) = a 3-oxo-Delta(4)-steroid + NADPH + H(+). It catalyses the reaction 5alpha-pregnane-3,20-dione + NADP(+) = progesterone + NADPH + H(+). The catalysed reaction is 17beta-hydroxy-5alpha-androstan-3-one + NADP(+) = testosterone + NADPH + H(+). It carries out the reaction androst-4-ene-3,17-dione + NADPH + H(+) = 5alpha-androstan-3,17-dione + NADP(+). Its function is as follows. Converts testosterone into 5-alpha-dihydrotestosterone and progesterone or corticosterone into their corresponding 5-alpha-3-oxosteroids. It plays a central role in sexual differentiation and androgen physiology. The chain is 3-oxo-5-alpha-steroid 4-dehydrogenase 1 (SRD5A1) from Macaca fascicularis (Crab-eating macaque).